Here is a 419-residue protein sequence, read N- to C-terminus: Serine hydroxymethyltransferase (419 aa).

(6S)-5,6,7,8-tetrahydrofolate contacts are provided by residues leucine 121 and 125-127; that span reads GHL. Lysine 230 is modified (N6-(pyridoxal phosphate)lysine). A (6S)-5,6,7,8-tetrahydrofolate-binding site is contributed by 354–356; it reads SPF.

It belongs to the SHMT family. In terms of assembly, homodimer. It depends on pyridoxal 5'-phosphate as a cofactor.

It is found in the cytoplasm. It catalyses the reaction (6R)-5,10-methylene-5,6,7,8-tetrahydrofolate + glycine + H2O = (6S)-5,6,7,8-tetrahydrofolate + L-serine. The protein operates within one-carbon metabolism; tetrahydrofolate interconversion. It participates in amino-acid biosynthesis; glycine biosynthesis; glycine from L-serine: step 1/1. Functionally, catalyzes the reversible interconversion of serine and glycine with tetrahydrofolate (THF) serving as the one-carbon carrier. This reaction serves as the major source of one-carbon groups required for the biosynthesis of purines, thymidylate, methionine, and other important biomolecules. Also exhibits THF-independent aldolase activity toward beta-hydroxyamino acids, producing glycine and aldehydes, via a retro-aldol mechanism. In Prochlorococcus marinus (strain SARG / CCMP1375 / SS120), this protein is Serine hydroxymethyltransferase.